A 123-amino-acid polypeptide reads, in one-letter code: ATP synthase epsilon chain (123 aa).

This sequence belongs to the ATPase epsilon chain family. In terms of assembly, F-type ATPases have 2 components, CF(1) - the catalytic core - and CF(0) - the membrane proton channel. CF(1) has five subunits: alpha(3), beta(3), gamma(1), delta(1), epsilon(1). CF(0) has three main subunits: a, b and c.

Its subcellular location is the cell inner membrane. Its function is as follows. Produces ATP from ADP in the presence of a proton gradient across the membrane. In Helicobacter pylori (strain ATCC 700392 / 26695) (Campylobacter pylori), this protein is ATP synthase epsilon chain (atpC).